Reading from the N-terminus, the 628-residue chain is uncharacterized protein (628 aa).

Disordered regions lie at residues M1–A65 and S80–S125. Residues I12–P21 are compositionally biased toward low complexity. A compositionally biased stretch (polar residues) spans P25–E37. Composition is skewed to low complexity over residues S48–S64 and S87–S102. Residues D103–S116 are compositionally biased toward basic and acidic residues. The next 12 helical transmembrane spans lie at I157 to L177, V203 to M223, L230 to G250, F259 to F279, I294 to A314, L324 to F344, L417 to Y437, V454 to P474, M483 to V503, V511 to V531, V542 to A562, and M583 to F603.

It belongs to the major facilitator superfamily. Allantoate permease family.

It is found in the membrane. This is an uncharacterized protein from Schizosaccharomyces pombe (strain 972 / ATCC 24843) (Fission yeast).